The chain runs to 473 residues: Microtubule-binding protein TANGLED (473 aa).

The required for binding to TAN and location to the cortical division sites (CDS) during cytokinesis stretch occupies residues 1-132 (MVARTPQKQR…VTRDIVDAIA (132 aa)). Disordered stretches follow at residues 131–218 (IAPK…ENSF) and 290–354 (ASKF…LSTA). Composition is skewed to polar residues over residues 205–216 (ISPQVKGNNGEN) and 307–329 (PTRN…TRTV).

As to quaternary structure, interacts with POK1. In terms of tissue distribution, strongly expressed in flower buds and root tips.

It localises to the nucleus. The protein resides in the nucleolus. Its subcellular location is the cytoplasm. The protein localises to the cytoskeleton. It is found in the phragmoplast. Is required for spatial control cell division during plant development. Through an association with microtubules, acts both for the positioning of cytoskeletal arrays that establish planes of cell division during prophase and for spatial guidance of expanding phragmoplasts toward preestablished cortical division sites (CDS) during cytokinesis. In Arabidopsis thaliana (Mouse-ear cress), this protein is Microtubule-binding protein TANGLED (TAN).